A 299-amino-acid chain; its full sequence is tRNA dimethylallyltransferase (299 aa).

Position 10–17 (10–17 (GATATGKS)) interacts with ATP. 12–17 (TATGKS) lines the substrate pocket. The interaction with substrate tRNA stretch occupies residues 35 to 38 (DSRQ).

Belongs to the IPP transferase family. In terms of assembly, monomer. Requires Mg(2+) as cofactor.

It catalyses the reaction adenosine(37) in tRNA + dimethylallyl diphosphate = N(6)-dimethylallyladenosine(37) in tRNA + diphosphate. Catalyzes the transfer of a dimethylallyl group onto the adenine at position 37 in tRNAs that read codons beginning with uridine, leading to the formation of N6-(dimethylallyl)adenosine (i(6)A). This chain is tRNA dimethylallyltransferase, found in Rippkaea orientalis (strain PCC 8801 / RF-1) (Cyanothece sp. (strain PCC 8801)).